The following is a 288-amino-acid chain: 4-diphosphocytidyl-2-C-methyl-D-erythritol kinase (288 aa).

Residue K13 is part of the active site. Position 96-106 (96-106 (PMGGGIGGGSS)) interacts with ATP. The active site involves D138.

The protein belongs to the GHMP kinase family. IspE subfamily.

It catalyses the reaction 4-CDP-2-C-methyl-D-erythritol + ATP = 4-CDP-2-C-methyl-D-erythritol 2-phosphate + ADP + H(+). It functions in the pathway isoprenoid biosynthesis; isopentenyl diphosphate biosynthesis via DXP pathway; isopentenyl diphosphate from 1-deoxy-D-xylulose 5-phosphate: step 3/6. Catalyzes the phosphorylation of the position 2 hydroxy group of 4-diphosphocytidyl-2C-methyl-D-erythritol. The sequence is that of 4-diphosphocytidyl-2-C-methyl-D-erythritol kinase from Aliivibrio fischeri (strain ATCC 700601 / ES114) (Vibrio fischeri).